The chain runs to 348 residues: tRNA pseudouridine synthase B (348 aa).

Residue Asp-52 is the Nucleophile of the active site.

The protein belongs to the pseudouridine synthase TruB family. Type 1 subfamily.

The enzyme catalyses uridine(55) in tRNA = pseudouridine(55) in tRNA. Responsible for synthesis of pseudouridine from uracil-55 in the psi GC loop of transfer RNAs. This chain is tRNA pseudouridine synthase B, found in Rhodopirellula baltica (strain DSM 10527 / NCIMB 13988 / SH1).